The primary structure comprises 156 residues: Small ribosomal subunit protein uS7 (156 aa).

This sequence belongs to the universal ribosomal protein uS7 family. In terms of assembly, part of the 30S ribosomal subunit. Contacts proteins S9 and S11.

One of the primary rRNA binding proteins, it binds directly to 16S rRNA where it nucleates assembly of the head domain of the 30S subunit. Is located at the subunit interface close to the decoding center, probably blocks exit of the E-site tRNA. This is Small ribosomal subunit protein uS7 from Geobacter sulfurreducens (strain ATCC 51573 / DSM 12127 / PCA).